The following is a 1041-amino-acid chain: Importin-9 (1041 aa).

The residue at position 2 (Ala2) is an N-acetylalanine. The Importin N-terminal domain maps to 43–119; sequence AEEQIKVLEV…RELLPNGLRE (77 aa). The tract at residues 936 to 967 is disordered; the sequence is QATPAEWSQDDSNDMWEDQEEEEEEEEDGLAG. Residues 943–964 are compositionally biased toward acidic residues; sequence SQDDSNDMWEDQEEEEEEEEDG.

It belongs to the importin beta family. Interacts with histones H2A, H2B, H3 and H4. The binding is coupled to RanGTP cycles. Interacts with AKIRIN2; promoting association with pre-assembled proteasomes. Associates with pre-assembled proteasomes; interaction is indirect and mediated via interaction with AKIRIN2. Interacts with PPP2R1A and PPP2R1B.

The protein resides in the cytoplasm. The protein localises to the nucleus. Nuclear transport receptor that mediates nuclear import of proteins, such as histones, proteasome and actin. Serves as receptor for nuclear localization signals (NLS) in cargo substrates. Is thought to mediate docking of the importin/substrate complex to the nuclear pore complex (NPC) through binding to nucleoporin and the complex is subsequently translocated through the pore by an energy requiring, Ran-dependent mechanism. At the nucleoplasmic side of the NPC, Ran binds to the importin, the importin/substrate complex dissociates and importin is re-exported from the nucleus to the cytoplasm where GTP hydrolysis releases Ran. The directionality of nuclear import is thought to be conferred by an asymmetric distribution of the GTP- and GDP-bound forms of Ran between the cytoplasm and nucleus. Mediates the import of pre-assembled proteasomes into the nucleus; AKIRIN2 acts as a molecular bridge between IPO9 and the proteasome complex. Mediates the nuclear import of histones H2A, H2B, H4 and H4. In addition to nuclear import, also acts as a chaperone for histones by preventing inappropriate non-nucleosomal interactions. Mediates the nuclear import of actin. The sequence is that of Importin-9 from Homo sapiens (Human).